The primary structure comprises 1435 residues: Putative ATP-dependent RNA helicase YLR419W (1435 aa).

Disordered regions lie at residues 1–57 (MAKK…STAS) and 226–251 (LSSH…KNSH). At Ser-9 the chain carries Phosphoserine. Residues 31–43 (KGQEPEPEDDKRA) show a composition bias toward basic and acidic residues. A compositionally biased stretch (polar residues) spans 45–57 (QQSNRAKVTSTAS). In terms of domain architecture, UBA spans 365–406 (PLSTRMIVERLTEIGVSSDEALLALQQNDMNENEAAGFLTRE). Residues 430–531 (QELESLESIY…EWLKENISKI (102 aa)) form the RWD domain. Residues 543-566 (DSKGAINKRNISNGKRSINNSSSR) are disordered. The span at 551–566 (RNISNGKRSINNSSSR) shows a compositional bias: polar residues. The Helicase ATP-binding domain occupies 614-782 (IDIINKNEVV…FPGLATCHIE (169 aa)). Position 627–634 (627–634 (GETGSGKS)) interacts with ATP. A DEAH box motif is present at residues 729–732 (DEVH). At Ser-816 the chain carries Phosphoserine. In terms of domain architecture, Helicase C-terminal spans 845–1020 (LLCQVVEYVH…SLYLSVKAMG (176 aa)).

It belongs to the DEAD box helicase family. DEAH subfamily.

Its subcellular location is the cytoplasm. The enzyme catalyses ATP + H2O = ADP + phosphate + H(+). Probable ATP-binding RNA helicase. The polypeptide is Putative ATP-dependent RNA helicase YLR419W (Saccharomyces cerevisiae (strain ATCC 204508 / S288c) (Baker's yeast)).